Here is a 236-residue protein sequence, read N- to C-terminus: Eukaryotic translation initiation factor 3 subunit J (236 aa).

2 disordered regions span residues 1-88 (MADD…LANM) and 188-236 (SEKQ…DDFM). Positions 28 to 46 (GEDDDEDVKESWEDEEEKK) are enriched in acidic residues. 3 stretches are compositionally biased toward basic and acidic residues: residues 47-58 (DEEKPTKTEAPV), 68-88 (AKLEEQERLNEEEERKRLANM), and 188-197 (SEKQKMEKAN). Coiled-coil stretches lie at residues 61 to 112 (KPNK…LKSA) and 174 to 209 (ADIKKVKMSVESLHSEKQKMEKANAKKSAAKAKGKV). Positions 201 to 210 (SAAKAKGKVS) are enriched in basic residues.

The protein belongs to the eIF-3 subunit J family. As to quaternary structure, component of the eukaryotic translation initiation factor 3 (eIF-3) complex. The eIF-3 complex interacts with pix.

The protein localises to the cytoplasm. Component of the eukaryotic translation initiation factor 3 (eIF-3) complex, which is involved in protein synthesis of a specialized repertoire of mRNAs and, together with other initiation factors, stimulates binding of mRNA and methionyl-tRNAi to the 40S ribosome. The eIF-3 complex specifically targets and initiates translation of a subset of mRNAs involved in cell proliferation. This is Eukaryotic translation initiation factor 3 subunit J from Drosophila virilis (Fruit fly).